A 1399-amino-acid polypeptide reads, in one-letter code: DNA-directed RNA polymerase subunit beta' (1399 aa).

Positions 70, 72, 85, and 88 each coordinate Zn(2+). 3 residues coordinate Mg(2+): Asp460, Asp462, and Asp464. Residues Cys814, Cys888, Cys895, and Cys898 each contribute to the Zn(2+) site. Residues 1367–1399 form a disordered region; the sequence is SERKRQRDLGKPQRVSASEAEAALTEALNSSGN. Positions 1382–1399 are enriched in low complexity; that stretch reads SASEAEAALTEALNSSGN.

Belongs to the RNA polymerase beta' chain family. The RNAP catalytic core consists of 2 alpha, 1 beta, 1 beta' and 1 omega subunit. When a sigma factor is associated with the core the holoenzyme is formed, which can initiate transcription. Requires Mg(2+) as cofactor. It depends on Zn(2+) as a cofactor.

It catalyses the reaction RNA(n) + a ribonucleoside 5'-triphosphate = RNA(n+1) + diphosphate. DNA-dependent RNA polymerase catalyzes the transcription of DNA into RNA using the four ribonucleoside triphosphates as substrates. This Pseudomonas paraeruginosa (strain DSM 24068 / PA7) (Pseudomonas aeruginosa (strain PA7)) protein is DNA-directed RNA polymerase subunit beta'.